The primary structure comprises 258 residues: Thiazole synthase (258 aa).

The active-site Schiff-base intermediate with DXP is the Lys98. Residues Gly159, 185–186, and 207–208 each bind 1-deoxy-D-xylulose 5-phosphate; these read AG and NT.

It belongs to the ThiG family. As to quaternary structure, homotetramer. Forms heterodimers with either ThiH or ThiS.

Its subcellular location is the cytoplasm. It catalyses the reaction [ThiS sulfur-carrier protein]-C-terminal-Gly-aminoethanethioate + 2-iminoacetate + 1-deoxy-D-xylulose 5-phosphate = [ThiS sulfur-carrier protein]-C-terminal Gly-Gly + 2-[(2R,5Z)-2-carboxy-4-methylthiazol-5(2H)-ylidene]ethyl phosphate + 2 H2O + H(+). It functions in the pathway cofactor biosynthesis; thiamine diphosphate biosynthesis. In terms of biological role, catalyzes the rearrangement of 1-deoxy-D-xylulose 5-phosphate (DXP) to produce the thiazole phosphate moiety of thiamine. Sulfur is provided by the thiocarboxylate moiety of the carrier protein ThiS. In vitro, sulfur can be provided by H(2)S. The polypeptide is Thiazole synthase (Cytophaga hutchinsonii (strain ATCC 33406 / DSM 1761 / CIP 103989 / NBRC 15051 / NCIMB 9469 / D465)).